The primary structure comprises 554 residues: Sesquiterpene synthase 14b (554 aa).

Residues Asp-305, Asp-309, Asp-449, and Glu-457 each coordinate Mg(2+). A DDXXD motif motif is present at residues 305–309 (DDLYD).

Belongs to the terpene synthase family. Tpsa subfamily. The cofactor is Mg(2+). Mn(2+) is required as a cofactor.

The catalysed reaction is (2E,6E)-farnesyl diphosphate = (E)-gamma-bisabolene + diphosphate. It catalyses the reaction (2Z,6Z)-farnesyl diphosphate = (E)-gamma-bisabolene + diphosphate. It carries out the reaction (2Z,6Z)-farnesyl diphosphate = (E)-alpha-bisabolene + diphosphate. The enzyme catalyses (2Z,6Z)-farnesyl diphosphate = (Z)-beta-farnesene + diphosphate. The catalysed reaction is (2E,6E)-farnesyl diphosphate = (E)-beta-farnesene + diphosphate. It catalyses the reaction (2E,6E)-farnesyl diphosphate = (+)-thujopsene + diphosphate. It carries out the reaction (2Z,6Z)-farnesyl diphosphate = (E)-beta-farnesene + diphosphate. The enzyme catalyses (2E,6E)-farnesyl diphosphate = (Z)-beta-farnesene + diphosphate. The catalysed reaction is (2Z,6Z)-farnesyl diphosphate = beta-acoradiene + diphosphate. It catalyses the reaction (2Z,6Z)-farnesyl diphosphate = alpha-acoradiene + diphosphate. It carries out the reaction (2Z,6Z)-farnesyl diphosphate = beta-bisabolene + diphosphate. The enzyme catalyses (2E,6E)-farnesyl diphosphate = (-)-alpha-cedrene + diphosphate. The catalysed reaction is (2E,6E)-farnesyl diphosphate = beta-bisabolene + diphosphate. It catalyses the reaction (2E,6E)-farnesyl diphosphate = beta-acoradiene + diphosphate. It carries out the reaction (2Z,6Z)-farnesyl diphosphate = (-)-alpha-cedrene + diphosphate. The enzyme catalyses (2E)-geranyl diphosphate = terpinolene + diphosphate. The catalysed reaction is (2E)-geranyl diphosphate = limonene + diphosphate. It catalyses the reaction (2E)-geranyl diphosphate = beta-myrcene + diphosphate. Its pathway is secondary metabolite biosynthesis; terpenoid biosynthesis. Its function is as follows. Sesquiterpene synthase involved in the biosynthesis of volatile compounds. Mediates the conversion of (2E,6E)-farnesyl diphosphate ((EE)-FPP) into (+)-thujopsene, beta-bisabolene, alpha-cederene, beta-acoradiene, (E)-gamma-bisabolene, (Z)-alpha-bisabolene, (Z)-beta-farnesene and (E)-beta-farnesene, and of (2Z,6Z)-farnesyl diphosphate ((ZZ)-FPP) into (E)-gamma-bisabolene, (E)-alpha-bisabolene, (E)-beta-farnesene, (Z)-beta-farnesene, beta-bisabolene, beta-acoradiene and alpha-acoradiene. Can act with a low efficiency as a monoterpene synthase with geranyl diphosphate (GPP) as substrate, thus producing beta-myrcene, limonene and terpinolene. The protein is Sesquiterpene synthase 14b of Solanum habrochaites (Wild tomato).